The chain runs to 293 residues: Bis(5'-nucleosyl)-tetraphosphatase, symmetrical (293 aa).

This sequence belongs to the Ap4A hydrolase family.

The catalysed reaction is P(1),P(4)-bis(5'-adenosyl) tetraphosphate + H2O = 2 ADP + 2 H(+). Functionally, hydrolyzes diadenosine 5',5'''-P1,P4-tetraphosphate to yield ADP. The protein is Bis(5'-nucleosyl)-tetraphosphatase, symmetrical of Pseudomonas fluorescens (strain Pf0-1).